Consider the following 843-residue polypeptide: Protein P (843 aa).

Positions 1 to 177 (MPLSYQHFRK…FCGSPYSWEQ (177 aa)) are terminal protein domain (TP). A spacer region spans residues 178–346 (DLQHGRLVFQ…YCLYHIVNLI (169 aa)). The segment at 219–250 (RKSRLGPQPAQGQLAGRQQGGSGSIRARVHPS) is disordered. Low complexity predominate over residues 223-235 (LGPQPAQGQLAGR). Residues 347-690 (EDWGPCTEHG…YLNLYPVARQ (344 aa)) form a polymerase/reverse transcriptase domain (RT) region. Residues 357-600 (EHRIRTPRTP…YSLNFMGYVI (244 aa)) enclose the Reverse transcriptase domain. Positions 429, 551, and 552 each coordinate Mg(2+).

The protein belongs to the hepadnaviridae P protein family.

The catalysed reaction is DNA(n) + a 2'-deoxyribonucleoside 5'-triphosphate = DNA(n+1) + diphosphate. The enzyme catalyses Endonucleolytic cleavage to 5'-phosphomonoester.. With respect to regulation, activated by host HSP70 and HSP40 in vitro to be able to bind the epsilon loop of the pgRNA. Because deletion of the RNase H region renders the protein partly chaperone-independent, the chaperones may be needed indirectly to relieve occlusion of the RNA-binding site by this domain. Inhibited by several reverse-transcriptase inhibitors: Lamivudine, Adefovir and Entecavir. In terms of biological role, multifunctional enzyme that converts the viral RNA genome into dsDNA in viral cytoplasmic capsids. This enzyme displays a DNA polymerase activity that can copy either DNA or RNA templates, and a ribonuclease H (RNase H) activity that cleaves the RNA strand of RNA-DNA heteroduplexes in a partially processive 3'- to 5'-endonucleasic mode. Neo-synthesized pregenomic RNA (pgRNA) are encapsidated together with the P protein, and reverse-transcribed inside the nucleocapsid. Initiation of reverse-transcription occurs first by binding the epsilon loop on the pgRNA genome, and is initiated by protein priming, thereby the 5'-end of (-)DNA is covalently linked to P protein. Partial (+)DNA is synthesized from the (-)DNA template and generates the relaxed circular DNA (RC-DNA) genome. After budding and infection, the RC-DNA migrates in the nucleus, and is converted into a plasmid-like covalently closed circular DNA (cccDNA). The activity of P protein does not seem to be necessary for cccDNA generation, and is presumably released from (+)DNA by host nuclear DNA repair machinery. The polypeptide is Protein P (Hepatitis B virus genotype B2 (isolate Vietnam/16091/1992) (HBV-B)).